The sequence spans 173 residues: NADH-ubiquinone oxidoreductase chain 6 (173 aa).

Transmembrane regions (helical) follow at residues 1 to 21 (MTYL…AVAS), 27 to 47 (YGVV…LSLG), 48 to 68 (VSFV…VVFV), 88 to 108 (VGYG…GGLI), and 139 to 159 (YGVG…FVVL).

Belongs to the complex I subunit 6 family.

The protein resides in the mitochondrion membrane. It carries out the reaction a ubiquinone + NADH + 5 H(+)(in) = a ubiquinol + NAD(+) + 4 H(+)(out). In terms of biological role, core subunit of the mitochondrial membrane respiratory chain NADH dehydrogenase (Complex I) that is believed to belong to the minimal assembly required for catalysis. Complex I functions in the transfer of electrons from NADH to the respiratory chain. The immediate electron acceptor for the enzyme is believed to be ubiquinone. This chain is NADH-ubiquinone oxidoreductase chain 6 (MT-ND6), found in Calidris maritima (Purple sandpiper).